Here is an 82-residue protein sequence, read N- to C-terminus: MAAGSTGERPFFEIITSIRYWVIHAVTLPSIFLAGFLFVSTGLAYDAFGTPRPDAYFQASESKAPVVSQRYEGKSELDIRLK.

The helical transmembrane segment at Val22 to Phe36 threads the bilayer. His24 contacts heme.

The protein belongs to the PsbE/PsbF family. Heterodimer of an alpha subunit and a beta subunit. PSII is composed of 1 copy each of membrane proteins PsbA, PsbB, PsbC, PsbD, PsbE, PsbF, PsbH, PsbI, PsbJ, PsbK, PsbL, PsbM, PsbT, PsbX, PsbY, PsbZ, Psb30/Ycf12, peripheral proteins PsbO, CyanoQ (PsbQ), PsbU, PsbV and a large number of cofactors. It forms dimeric complexes. Heme b serves as cofactor.

It is found in the cellular thylakoid membrane. Functionally, this b-type cytochrome is tightly associated with the reaction center of photosystem II (PSII). PSII is a light-driven water:plastoquinone oxidoreductase that uses light energy to abstract electrons from H(2)O, generating O(2) and a proton gradient subsequently used for ATP formation. It consists of a core antenna complex that captures photons, and an electron transfer chain that converts photonic excitation into a charge separation. The protein is Cytochrome b559 subunit alpha of Synechococcus sp. (strain CC9605).